The primary structure comprises 240 residues: PF03932 family protein CutC (240 aa).

Belongs to the CutC family.

Its subcellular location is the cytoplasm. The chain is PF03932 family protein CutC from Xanthomonas campestris pv. campestris (strain 8004).